Reading from the N-terminus, the 288-residue chain is Beta-lactamase PSE-1 (288 aa).

An N-terminal signal peptide occupies residues 1–17 (MKFLLAFSLLIPSVVFA). Catalysis depends on Ser65, which acts as the Acyl-ester intermediate. Cysteines 72 and 118 form a disulfide. 229 to 231 (RSG) contributes to the substrate binding site.

It belongs to the class-A beta-lactamase family. Monomer.

It catalyses the reaction a beta-lactam + H2O = a substituted beta-amino acid. With respect to regulation, inhibited by p-chloromercuribenzoate but not by cloxacillin. In terms of biological role, hydrolyzes penicillin, ampicillin and carbenicillin but not other antibiotics including oxacillin, methicillin and cloxacillin. The sequence is that of Beta-lactamase PSE-1 from Pseudomonas aeruginosa.